A 494-amino-acid polypeptide reads, in one-letter code: Ubiquitin carboxyl-terminal hydrolase 27 (494 aa).

A helical transmembrane segment spans residues 30–50; it reads LSFAGLLGVAGFVFAQQHGLF. A USP domain is found at 74–494; sequence PGLQNLGNNC…EASLLFYERL (421 aa). Cysteine 83 acts as the Nucleophile in catalysis. The Proton acceptor role is filled by histidine 440.

This sequence belongs to the peptidase C19 family.

Its subcellular location is the membrane. It carries out the reaction Thiol-dependent hydrolysis of ester, thioester, amide, peptide and isopeptide bonds formed by the C-terminal Gly of ubiquitin (a 76-residue protein attached to proteins as an intracellular targeting signal).. Recognizes and hydrolyzes the peptide bond at the C-terminal Gly of ubiquitin. Involved in the processing of poly-ubiquitin precursors as well as that of ubiquitinated proteins. In Arabidopsis thaliana (Mouse-ear cress), this protein is Ubiquitin carboxyl-terminal hydrolase 27 (UBP27).